Consider the following 466-residue polypeptide: Glycine--tRNA ligase (466 aa).

Positions 105 and 168 each coordinate substrate. Residues 200-202, 210-215, 287-288, and 331-334 contribute to the ATP site; these read RNE, FRTREF, EL, and GLTR. Substrate is bound at residue 215–219; it reads FEQME. 327–331 is a binding site for substrate; that stretch reads EPAAG.

This sequence belongs to the class-II aminoacyl-tRNA synthetase family. Homodimer.

It localises to the cytoplasm. The enzyme catalyses tRNA(Gly) + glycine + ATP = glycyl-tRNA(Gly) + AMP + diphosphate. Catalyzes the attachment of glycine to tRNA(Gly). This Nocardia farcinica (strain IFM 10152) protein is Glycine--tRNA ligase.